The following is an 834-amino-acid chain: ATP-dependent DNA helicase fml1 (834 aa).

The Helicase ATP-binding domain occupies 80 to 248 (IVQKALFENV…NVIDSLHISR (169 aa)). 93 to 100 (LPTGLGKT) is a binding site for ATP. Residues 196–199 (DEAH) carry the DEAH box motif. The Helicase C-terminal domain maps to 416 to 582 (HLERIVTEYF…GLSLSEKSYR (167 aa)). The interval 650–690 (EESPFEICPVTYSIEQEKKLEKYKRVCLRGLDIHRNRRLSQ) is interaction with MHF complex. A disordered region spans residues 738-769 (NSTDRDTKQPKMHDFRQPLHPNPMTTLKRKGQ). Basic and acidic residues predominate over residues 740–754 (TDRDTKQPKMHDFRQ).

The protein belongs to the DEAD box helicase family. DEAH subfamily. FANCM sub-subfamily.

Its subcellular location is the cytoplasm. It is found in the nucleus. The protein localises to the nucleolus. It catalyses the reaction ATP + H2O = ADP + phosphate + H(+). In terms of biological role, ATP-dependent DNA helicase involved in DNA damage repair by homologous recombination and in genome maintenance. Capable of unwinding D-loops. Plays a role in limiting crossover recombination during mitotic DNA double-strand break (DSB) repair. Component of a FANCM-MHF complex which promotes gene conversion at blocked replication forks, probably by reversal of the stalled fork. FANCM-MHF also promotes non-crossover recombination in meiotic cells. This Schizosaccharomyces pombe (strain 972 / ATCC 24843) (Fission yeast) protein is ATP-dependent DNA helicase fml1.